Here is an 826-residue protein sequence, read N- to C-terminus: Sister chromatid cohesion protein PDS5 homolog D (826 aa).

HEAT repeat units follow at residues 18-54 (GTNL…LSMQ), 55-94 (SALI…ITAP), 151-188 (DLIL…DETE), 189-226 (QVST…RCAR), and 230-267 (PYII…HSPV). Disordered regions lie at residues 261 to 551 (PKVH…EVES) and 640 to 826 (KKSK…KRKS). 2 stretches are compositionally biased toward basic and acidic residues: residues 269-286 (TKEH…KENL) and 296-309 (RHET…EKVR). Positions 281–288 (SRKENLSK) match the Nuclear localization signal 1 motif. Polar residues predominate over residues 311-323 (GNKSSLLKQSLKQ). The Nuclear localization signal 2 signature appears at 357–364 (GKRDPLKT). Polar residues predominate over residues 396-408 (SPATSSRSLTGSL). One copy of the HEAT 6 repeat lies at 424–461 (SLSSPRLKKLASCFRDEEPNQEDDRKIGNSSKQTRSKN). Basic and acidic residues predominate over residues 437-450 (FRDEEPNQEDDRKI). Residues 451 to 460 (GNSSKQTRSK) are compositionally biased toward polar residues. A compositionally biased stretch (low complexity) spans 644 to 663 (NVAVSVEPTSSSGVRSSSRT). Basic and acidic residues predominate over residues 665-701 (MKKDCGKRLNKQVEKTREGKNLRSLKELNAETDRTAE). Acidic residues predominate over residues 702–724 (EQEVSLEAESDDRSEEQEYEDDC). The span at 725–746 (SDKKEQSQDKGVEAETKEEEKQ) shows a compositional bias: basic and acidic residues. 3 stretches are compositionally biased toward acidic residues: residues 752–763 (GESEGEDSESEE), 771–800 (DDME…EVDD), and 811–826 (EKEE…KRKS). The stretch at 770 to 825 (TDDMEDDEEEEEEEIDHMEDEAEEEKEEVDDKEASANMSEIEKEEEEEEEDEEKRK) forms a coiled coil.

It belongs to the PDS5 family. In terms of assembly, interacts with the cohesin complex.

The protein localises to the nucleus. Its function is as follows. Cohesin cofactor dispensable during the meiotic division but playing an important role in DNA repair by homologous recombination (HR) probably by helping SMC5/SMC6 complex. Regulator of sister chromatid cohesion in mitosis which may stabilize cohesin complex association with chromatin. May couple sister chromatid cohesion during mitosis to DNA replication. Cohesion ensures that chromosome partitioning is accurate in both meiotic and mitotic cells and plays an important role in DNA repair. The sequence is that of Sister chromatid cohesion protein PDS5 homolog D from Arabidopsis thaliana (Mouse-ear cress).